The primary structure comprises 158 residues: NADPH-dependent 7-cyano-7-deazaguanine reductase (158 aa).

Residue Cys56 is the Thioimide intermediate of the active site. Asp63 functions as the Proton donor in the catalytic mechanism. Residues 78 to 80 (VES) and 97 to 98 (HE) contribute to the substrate site.

This sequence belongs to the GTP cyclohydrolase I family. QueF type 1 subfamily.

The protein localises to the cytoplasm. The catalysed reaction is 7-aminomethyl-7-carbaguanine + 2 NADP(+) = 7-cyano-7-deazaguanine + 2 NADPH + 3 H(+). The protein operates within tRNA modification; tRNA-queuosine biosynthesis. In terms of biological role, catalyzes the NADPH-dependent reduction of 7-cyano-7-deazaguanine (preQ0) to 7-aminomethyl-7-deazaguanine (preQ1). In Rhodopseudomonas palustris (strain HaA2), this protein is NADPH-dependent 7-cyano-7-deazaguanine reductase.